The following is a 90-amino-acid chain: Small ribosomal subunit protein bS20 (90 aa).

Belongs to the bacterial ribosomal protein bS20 family.

In terms of biological role, binds directly to 16S ribosomal RNA. In Fusobacterium nucleatum subsp. nucleatum (strain ATCC 25586 / DSM 15643 / BCRC 10681 / CIP 101130 / JCM 8532 / KCTC 2640 / LMG 13131 / VPI 4355), this protein is Small ribosomal subunit protein bS20.